A 419-amino-acid polypeptide reads, in one-letter code: Large ribosomal subunit protein uL4 (419 aa).

At Ala2 the chain carries N-acetylalanine. The residue at position 14 (Lys14) is an N6-acetyllysine. Omega-N-methylarginine is present on Arg97. Lys106 carries the post-translational modification N6-acetyllysine. Lys239 participates in a covalent cross-link: Glycyl lysine isopeptide (Lys-Gly) (interchain with G-Cter in SUMO2). At Lys259 the chain carries N6-acetyllysine. Thr266 carries the post-translational modification Phosphothreonine. Ser290 and Ser295 each carry phosphoserine. Arg300 bears the Citrulline mark. Residue Lys327 forms a Glycyl lysine isopeptide (Lys-Gly) (interchain with G-Cter in SUMO2) linkage. Residues Lys333 and Lys353 each carry the N6-acetyllysine modification. Lys364 bears the N6-acetyllysine; alternate mark. A Glycyl lysine isopeptide (Lys-Gly) (interchain with G-Cter in SUMO1); alternate cross-link involves residue Lys364. The span at 364 to 379 (KSEKVVPEKGTADKKP) shows a compositional bias: basic and acidic residues. Residues 364-419 (KSEKVVPEKGTADKKPAVGKKGKKVDAKKQKPAGKKVVAKKPAEKKPTTEEKKPAA) form a disordered region. Ser365 carries the post-translational modification Phosphoserine. The segment covering 393–402 (QKPAGKKVVA) has biased composition (basic residues). A compositionally biased stretch (basic and acidic residues) spans 404–419 (KPAEKKPTTEEKKPAA).

The protein belongs to the universal ribosomal protein uL4 family. Component of the large ribosomal subunit. May bind IPO9 with low affinity. Interacts with RBM3. Citrullinated by PADI4.

The protein localises to the cytoplasm. In terms of biological role, component of the large ribosomal subunit. The ribosome is a large ribonucleoprotein complex responsible for the synthesis of proteins in the cell. The sequence is that of Large ribosomal subunit protein uL4 (Rpl4) from Mus musculus (Mouse).